A 492-amino-acid polypeptide reads, in one-letter code: UPF0652 protein C22H10.08 (492 aa).

Belongs to the UPF0652 family.

The protein localises to the cytoplasm. Its subcellular location is the nucleus. The polypeptide is UPF0652 protein C22H10.08 (Schizosaccharomyces pombe (strain 972 / ATCC 24843) (Fission yeast)).